Reading from the N-terminus, the 367-residue chain is Phospho-N-acetylmuramoyl-pentapeptide-transferase (367 aa).

The next 10 helical transmembrane spans lie at 27-47 (VLAAMTALLLSLAAGPAVIRW), 73-93 (TMGGVLILIAIGITTLLWGDL), 97-117 (YVWTVLVVTLGYGIVGWYDDW), 132-152 (WKFFWQSVLGIGAALFIAFSA), 167-187 (TMAYPLGVIGFITLTYFVIVG), 200-220 (GLAIMPTVMIAAAFALIAYVT), 237-257 (AGELCIFLGAIAGAGLGFLWF), 264-284 (VFMGDVGALALGAALGTVAVI), 289-309 (IVLLIMGGVFVIETLSVMLQV), and 344-364 (QVVVRFWIITIMLVLIGLSTL).

It belongs to the glycosyltransferase 4 family. MraY subfamily. Mg(2+) is required as a cofactor.

It is found in the cell inner membrane. The enzyme catalyses UDP-N-acetyl-alpha-D-muramoyl-L-alanyl-gamma-D-glutamyl-meso-2,6-diaminopimeloyl-D-alanyl-D-alanine + di-trans,octa-cis-undecaprenyl phosphate = di-trans,octa-cis-undecaprenyl diphospho-N-acetyl-alpha-D-muramoyl-L-alanyl-D-glutamyl-meso-2,6-diaminopimeloyl-D-alanyl-D-alanine + UMP. It functions in the pathway cell wall biogenesis; peptidoglycan biosynthesis. Catalyzes the initial step of the lipid cycle reactions in the biosynthesis of the cell wall peptidoglycan: transfers peptidoglycan precursor phospho-MurNAc-pentapeptide from UDP-MurNAc-pentapeptide onto the lipid carrier undecaprenyl phosphate, yielding undecaprenyl-pyrophosphoryl-MurNAc-pentapeptide, known as lipid I. This Dechloromonas aromatica (strain RCB) protein is Phospho-N-acetylmuramoyl-pentapeptide-transferase.